We begin with the raw amino-acid sequence, 223 residues long: Ribose-5-phosphate isomerase A (223 aa).

Residues 32–35, 85–88, and 98–101 contribute to the substrate site; these read TGST, DGAD, and KGGG. Glutamate 107 serves as the catalytic Proton acceptor. Residue lysine 125 coordinates substrate.

The protein belongs to the ribose 5-phosphate isomerase family. Homodimer.

It carries out the reaction aldehydo-D-ribose 5-phosphate = D-ribulose 5-phosphate. It functions in the pathway carbohydrate degradation; pentose phosphate pathway; D-ribose 5-phosphate from D-ribulose 5-phosphate (non-oxidative stage): step 1/1. Catalyzes the reversible conversion of ribose-5-phosphate to ribulose 5-phosphate. The protein is Ribose-5-phosphate isomerase A of Pseudomonas aeruginosa (strain LESB58).